Consider the following 78-residue polypeptide: Spermatid-specific protein T1 (78 aa).

The interval 1–21 (MKVAANSSKMLAEKLELMKGG) is hydrophobic. Residues 1-78 (MKVAANSSKM…YSRRRYRRRR (78 aa)) are disordered. Basic residues predominate over residues 20–78 (GGRRRRRRSRRRRRRSRRRSRSPYRRRYRRRRRRRRRRSRRRRYRRRRSYSRRRYRRRR).

In terms of processing, phosphorylation occurs at different degrees. The triphosphorylated form may be predominant in T1. SP1 appears to be phosphorylated in elongated spermatids, but dephosphorylated in mature sperm cells. As to expression, testis.

The protein resides in the nucleus. It is found in the chromosome. Its function is as follows. Cuttlefish spermiogenesis is characterized by a double nuclear protein transition: histones -&gt; spermatid-specific proteins (T1/T2) -&gt; protamines (SP1/SP2). The protamines compact sperm DNA into a highly condensed, stable and inactive complex. This Sepia officinalis (Common cuttlefish) protein is Spermatid-specific protein T1.